The sequence spans 593 residues: Pyruvate kinase isozyme A, chloroplastic (593 aa).

Residues 57–94 (DEPQSSPVLVSENGSGGVLSSATQEYGRNAAPGTDSSS) form a disordered region. Position 144 (arginine 144) interacts with substrate. Residues asparagine 146, aspartate 178, and threonine 179 each contribute to the K(+) site. An ATP-binding site is contributed by 146 to 149 (NMCH). Residue glutamate 343 participates in Mg(2+) binding. Positions 366, 367, and 399 each coordinate substrate. Aspartate 367 provides a ligand contact to Mg(2+).

Belongs to the pyruvate kinase family. Mg(2+) is required as a cofactor. The cofactor is K(+). Highest levels in roots. Also found in stems, leaves and flowers.

It is found in the plastid. The protein localises to the chloroplast. The enzyme catalyses pyruvate + ATP = phosphoenolpyruvate + ADP + H(+). It functions in the pathway carbohydrate degradation; glycolysis; pyruvate from D-glyceraldehyde 3-phosphate: step 5/5. The protein is Pyruvate kinase isozyme A, chloroplastic of Nicotiana tabacum (Common tobacco).